Here is a 147-residue protein sequence, read N- to C-terminus: UPF0178 protein VIBHAR_03247 (147 aa).

The protein belongs to the UPF0178 family.

This chain is UPF0178 protein VIBHAR_03247, found in Vibrio campbellii (strain ATCC BAA-1116).